A 163-amino-acid polypeptide reads, in one-letter code: NADH-quinone oxidoreductase subunit I (163 aa).

2 consecutive 4Fe-4S ferredoxin-type domains span residues 53-83 (LRRYPNGEERCIACKLCEAICPAQAITIEAG) and 94-123 (VRYDIDMVKCIYCGFCQEACPVEAIVEGPN). The [4Fe-4S] cluster site is built by Cys63, Cys66, Cys69, Cys73, Cys103, Cys106, Cys109, and Cys113.

The protein belongs to the complex I 23 kDa subunit family. In terms of assembly, NDH-1 is composed of 14 different subunits. Subunits NuoA, H, J, K, L, M, N constitute the membrane sector of the complex. The cofactor is [4Fe-4S] cluster.

Its subcellular location is the cell inner membrane. It catalyses the reaction a quinone + NADH + 5 H(+)(in) = a quinol + NAD(+) + 4 H(+)(out). NDH-1 shuttles electrons from NADH, via FMN and iron-sulfur (Fe-S) centers, to quinones in the respiratory chain. The immediate electron acceptor for the enzyme in this species is believed to be ubiquinone. Couples the redox reaction to proton translocation (for every two electrons transferred, four hydrogen ions are translocated across the cytoplasmic membrane), and thus conserves the redox energy in a proton gradient. This chain is NADH-quinone oxidoreductase subunit I, found in Bartonella bacilliformis (strain ATCC 35685 / KC583 / Herrer 020/F12,63).